The following is a 423-amino-acid chain: Imidazolonepropionase (423 aa).

2 residues coordinate Fe(3+): His78 and His80. Positions 78 and 80 each coordinate Zn(2+). 4-imidazolone-5-propanoate contacts are provided by Arg87, Tyr150, and His183. Tyr150 serves as a coordination point for N-formimidoyl-L-glutamate. Residue His247 participates in Fe(3+) binding. His247 contributes to the Zn(2+) binding site. Glu250 provides a ligand contact to 4-imidazolone-5-propanoate. Asp322 lines the Fe(3+) pocket. Asp322 contacts Zn(2+). Positions 324 and 326 each coordinate N-formimidoyl-L-glutamate. Ser327 provides a ligand contact to 4-imidazolone-5-propanoate.

It belongs to the metallo-dependent hydrolases superfamily. HutI family. The cofactor is Zn(2+). Requires Fe(3+) as cofactor.

It is found in the cytoplasm. The enzyme catalyses 4-imidazolone-5-propanoate + H2O = N-formimidoyl-L-glutamate. The protein operates within amino-acid degradation; L-histidine degradation into L-glutamate; N-formimidoyl-L-glutamate from L-histidine: step 3/3. In terms of biological role, catalyzes the hydrolytic cleavage of the carbon-nitrogen bond in imidazolone-5-propanoate to yield N-formimidoyl-L-glutamate. It is the third step in the universal histidine degradation pathway. The protein is Imidazolonepropionase of Bacillus thuringiensis (strain Al Hakam).